Consider the following 131-residue polypeptide: Thrombocorticin (131 aa).

A disulfide bridge links cysteine 3 with cysteine 111. The disordered stretch occupies residues 28-60 (RNESVEVKDSNGNTVSRGSGSSSSGGTFTVINM). The segment covering 37 to 54 (SNGNTVSRGSGSSSSGGT) has biased composition (low complexity). The short motif at 117-131 (DFNDVFVLITGLVRG) is the Pseudodomain-swapping motif element.

Its function is as follows. Binds to fucose and mannose in a calcium-dependent manner (in vitro). Acts as an agonist for human thrombopoietin receptor MPL (in vitro). Binding of sugar-moieties may promote the interaction with human MPL on the cell surface (in vitro). Catalyzes MPL dimerization and activation, and modulates internalization of the receptor (in vitro). Exhibits proliferation activity in murine recombinant Ba/F3 cells expressing human MPL (Ba/F3-huMPL) (in vitro). Induces phosphorylation of STAT5 in recombinant Ba/F3-huMPL cells, possibly by stimulating MPL on the cell surface to transduce signals via Jak/STAT signaling pathway (in vitro). Does not aggregate rabbit erythrocytes, indicating absent lectin-like agglutination activity (in vitro). The protein is Thrombocorticin of Corticium sp. (Marine sponge).